The chain runs to 619 residues: Sodium-dependent dopamine transporter (619 aa).

At 1 to 56 (MSKSKCSVGPMSSVVAPAKEPNAVGPREVELILVKEQNGVQLTNSTLINPPQTPVE) the chain is on the cytoplasmic side. Residues 57-95 (VQERETWSKKIDFLLSVIGFAVDLANVWRFPYLCYKNGG) form a discontinuously helical membrane-spanning segment. Na(+) contacts are provided by Gly-75, Ala-77, Val-78, Asp-79, and Asn-82. Asp-79 lines the dopamine pocket. Helical transmembrane passes span 96–127 (GAFL…NREG) and 128–171 (AAGV…FSSF). The dopamine site is built by Ser-149 and Gly-153. The Extracellular portion of the chain corresponds to 172 to 235 (TMDLPWIHCN…SRGIDDLGPP (64 aa)). Cysteines 180 and 189 form a disulfide. N-linked (GlcNAc...) asparagine glycans are attached at residues Asn-181, Asn-188, Asn-196, and Asn-204. A run of 2 helical transmembrane segments spans residues 236-255 (RWQL…FSLW) and 256-286 (KGVK…GVTL). Over 287 to 305 (PGAMDGIRAYLSVDFYRLC) the chain is Extracellular. A discontinuously helical transmembrane segment spans residues 306-334 (EASVWIDAATQVCFSLGVGFGVLIAFSSY). A chloride-binding site is contributed by Gln-316. Phe-319 contributes to the dopamine binding site. Residues Ser-320 and Asn-352 each contribute to the Na(+) site. Ser-320 is a chloride binding site. Residues 335-375 (NKFTNNCYRDAIITTSINSLTSFSSGFVVFSFLGYMAQKHN) traverse the membrane as a helical segment. Residue Ser-356 participates in chloride binding. Residues 376-399 (VPIRDVATDGPGLIFIIYPEAIAT) lie on the Extracellular side of the membrane. Transmembrane regions (helical) follow at residues 400–441 (LPLS…QLLH), 442–465 (RHRE…CVTN), and 466–498 (GGIY…AWFY). Na(+) contacts are provided by Leu-417, Asp-420, and Ser-421. The dopamine site is built by Ser-421 and Ala-422. Topologically, residues 499 to 515 (GVQQFSDDIKQMTGQRP) are cytoplasmic. The helical transmembrane segment at 516–541 (NLYWRLCWKLVSPCFLLYVVVVSIVT) threads the bilayer. At 542–552 (FRPPHYGAYIF) the chain is on the extracellular side. A helical membrane pass occupies residues 553–582 (PDWANALGWIIATSSMAMVPIYATYKFCSL). The tract at residues 560-589 (GWIIATSSMAMVPIYATYKFCSLPGSFREK) is interaction with TGFB1I1. Residues 583 to 619 (PGSFREKLAYAITPEKDRQLVDRGEVRQFTLRHWLLV) are Cytoplasmic-facing.

This sequence belongs to the sodium:neurotransmitter symporter (SNF) (TC 2.A.22) family. SLC6A3 subfamily. Monomer. Homooligomer; disulfide-linked. Interacts with PRKCABP and TGFB1I1. Interacts (via N-terminus) with SYNGR3 (via N-terminus). Interacts with SLC18A2. Interacts with TOR1A (ATP-bound); TOR1A regulates SLC6A3 subcellular location. Interacts with alpha-synuclein/SNCA. Interacts with SEPTIN4. As to expression, found in the substantia nigra and ventral tegmental dopamine neurons, in fibers of the medial forebrain bundle ascending into the striatum, and within dense fiber networks and varicosities in the dorsal and ventral striatum (at protein level). Lower expression in the cortex (at protein level). Absent from the corpus callosum. Expressed throughout the retina at postnatal day 8.

The protein resides in the cell membrane. Its subcellular location is the cell projection. It localises to the neuron projection. The protein localises to the axon. The catalysed reaction is dopamine(out) + chloride(out) + Na(+)(out) = dopamine(in) + chloride(in) + Na(+)(in). It carries out the reaction (R)-noradrenaline(out) + chloride(out) + Na(+)(out) = (R)-noradrenaline(in) + chloride(in) + Na(+)(in). It catalyses the reaction dopamine(out) + chloride(out) + 2 Na(+)(out) = dopamine(in) + chloride(in) + 2 Na(+)(in). Inhibited by amphetamine, bupropion, cocaine and ritalin. Inhibited by zinc ions. In terms of biological role, mediates sodium- and chloride-dependent transport of dopamine. Also mediates sodium- and chloride-dependent transport of norepinephrine (also known as noradrenaline). Regulator of light-dependent retinal hyaloid vessel regression, downstream of OPN5 signaling. In Mus musculus (Mouse), this protein is Sodium-dependent dopamine transporter (Slc6a3).